The sequence spans 161 residues: Decarboxylase (161 aa).

The EthD domain maps to 29–131 (QGMSEEAYRK…VGDHENFADT (103 aa)).

Belongs to the tpcK family.

The enzyme catalyses atrochrysone carboxylate + H(+) = atrochrysone + CO2. The protein operates within secondary metabolite biosynthesis. Its function is as follows. Decarboxylase; part of the gene cluster that mediates the biosynthesis of monodictyphenone, a prenyl xanthone derivative. The pathway begins with the synthesis of atrochrysone thioester by the polyketide synthase (PKS) mdpG. The atrochrysone carboxyl ACP thioesterase mdpF then breaks the thioester bond and releases the atrochrysone carboxylic acid from mdpG. The atrochrysone carboxylic acid is then converted to atrochrysone which is further transformed into emodin anthrone by mdpH-1 and mdpH-2. Emodin is further modified to yield monodictyphenone via several steps involving mdpB, mdpC mdpJ, mdpK and mdpL. These enzymes with xptA, xptB and xptC are also proposed to be involved in the synthesis of shamixanthone from emodin. Especially, direct reduction of emodin by the short chain dehydrogenase mdpC followed by dehydration catalyzed by the scytalone dehydratase-like protein mdpB gives loss of oxygen and formation of chrysophanol intermediate in two simple steps. The protein is Decarboxylase of Emericella nidulans (strain FGSC A4 / ATCC 38163 / CBS 112.46 / NRRL 194 / M139) (Aspergillus nidulans).